A 377-amino-acid chain; its full sequence is Transmembrane protein 237A (377 aa).

3 stretches are compositionally biased toward basic and acidic residues: residues 1–11 (MCVTSRADKMP), 43–64 (LESR…DNPP), and 74–87 (HTFE…DHPN). Positions 1 to 124 (MCVTSRADKM…NQSHNELGVE (124 aa)) are disordered. 4 helical membrane-spanning segments follow: residues 198 to 218 (IIGL…IIVV), 239 to 259 (LAYP…VSAF), 273 to 293 (GFLT…ALIL), and 326 to 346 (PWIV…VFVA).

It belongs to the TMEM237 family.

The protein resides in the membrane. It localises to the cell projection. The protein localises to the cilium. Functionally, component of the transition zone in primary cilia. Required for ciliogenesis. The polypeptide is Transmembrane protein 237A (tmem237a) (Danio rerio (Zebrafish)).